We begin with the raw amino-acid sequence, 303 residues long: WD repeat-containing protein 38 (303 aa).

WD repeat units follow at residues 24 to 63, 66 to 105, 108 to 147, 150 to 189, 195 to 233, 236 to 277, and 279 to 303; these read QHHG…LLWR, GHRG…CLHV, GHQR…RVHL, GHCD…PVVS, GHTG…LPLQ, GHTI…ETLK, and MLDV…AVTR.

The chain is WD repeat-containing protein 38 (Wdr38) from Mus musculus (Mouse).